We begin with the raw amino-acid sequence, 351 residues long: Phosphoribosylformylglycinamidine cyclo-ligase (351 aa).

It belongs to the AIR synthase family.

The protein resides in the cytoplasm. The catalysed reaction is 2-formamido-N(1)-(5-O-phospho-beta-D-ribosyl)acetamidine + ATP = 5-amino-1-(5-phospho-beta-D-ribosyl)imidazole + ADP + phosphate + H(+). Its pathway is purine metabolism; IMP biosynthesis via de novo pathway; 5-amino-1-(5-phospho-D-ribosyl)imidazole from N(2)-formyl-N(1)-(5-phospho-D-ribosyl)glycinamide: step 2/2. This is Phosphoribosylformylglycinamidine cyclo-ligase from Idiomarina loihiensis (strain ATCC BAA-735 / DSM 15497 / L2-TR).